Here is a 127-residue protein sequence, read N- to C-terminus: MSYKPIAPAPSSTPGSSTPGPGTPVPTAGSVPSPSGSVPGAAAPFRPLFNDFGPPSMGYVQAMKPPGSQGSQSTYTDLLSVIEEMGKEIRPTYAGSKSAMERLKRGIIHARALVRECLAETERNART.

The interval 1-47 (MSYKPIAPAPSSTPGSSTPGPGTPVPTAGSVPSPSGSVPGAAAPFRP) is disordered. Positions 9–44 (APSSTPGSSTPGPGTPVPTAGSVPSPSGSVPGAAAP) are enriched in low complexity. The segment at 65 to 107 (PPGSQGSQSTYTDLLSVIEEMGKEIRPTYAGSKSAMERLKRGI) is interaction with CDK2.

The protein belongs to the CDK2AP family. In terms of assembly, component of the nucleosome remodeling and deacetylase (NuRD) repressor complex, composed of core proteins MTA1, MTA2, MTA3, RBBP4, RBBP7, HDAC1, HDAC2, MBD2, MBD3, and peripherally associated proteins CDK2AP1, CDK2AP2, GATAD2A, GATAD2B, CHD3, CHD4 and CHD5. The exact stoichiometry of the NuRD complex is unknown, and some subunits such as MBD2 and MBD3, GATAD2A and GATAD2B, and CHD3, CHD4 and CHD5 define mutually exclusive NuRD complexes. Interacts with CDK2AP1. Interacts with CDK2. Interacts with MAPK1. Phosphorylated by MAPK1 and CDK2. As to expression, oocytes (at protein level).

The protein localises to the cytoplasm. It is found in the nucleus. Acts as a component of the histone deacetylase NuRD complex which participates in the remodeling of chromatin. Inhibits cell cycle G1/S phase transition by repressing CDK2 expression and activation; represses CDK2 activation by inhibiting its interaction with cyclin E and A. Plays a role in regulating the self-renewal of embryonic stem cells (ESCs) and in maintaining cell survival during terminal differentiation of ESCs. Regulates microtubule organization of metaphase II oocytes. In Mus musculus (Mouse), this protein is Cyclin-dependent kinase 2-associated protein 2 (Cdk2ap2).